Reading from the N-terminus, the 150-residue chain is Large ribosomal subunit protein bL9 (150 aa).

It belongs to the bacterial ribosomal protein bL9 family.

Its function is as follows. Binds to the 23S rRNA. The protein is Large ribosomal subunit protein bL9 of Aromatoleum aromaticum (strain DSM 19018 / LMG 30748 / EbN1) (Azoarcus sp. (strain EbN1)).